Reading from the N-terminus, the 202-residue chain is uncharacterized protein (202 aa).

Belongs to the dienelactone hydrolase family.

This is an uncharacterized protein from Bacillus subtilis (strain 168).